Reading from the N-terminus, the 502-residue chain is Protein DETOXIFICATION 55 (502 aa).

Transmembrane regions (helical) follow at residues 30–50 (IWDISFPVAAMSILNYLKNMT), 61–81 (LELAGGALAIGFTNITGYSVL), 112–132 (IFLLLLASLPISLLWLNLAPL), 145–165 (VASLYCSFSLPDLLANSFLHP), 185–205 (VSVLLHLPITAFFTFYISLGV), 207–227 (GVAVSSFLTNFISLSLLLCYI), 261–283 (VWSTLVKFAVPSCIAVCLEWWWY), 298–318 (VALAAAAIVIQTTSLMYTIPT), 344–364 (ATVAVGAAVAVSVFGLVGTTV), 378–398 (VVLELTAAVIPVIGACELANC), 419–439 (INFYAFYVVGAPVAVVLAFVW), and 447–467 (CYGLLGAQLACAISILTVVYN).

This sequence belongs to the multi antimicrobial extrusion (MATE) (TC 2.A.66.1) family.

The protein localises to the membrane. The protein is Protein DETOXIFICATION 55 of Arabidopsis thaliana (Mouse-ear cress).